A 113-amino-acid chain; its full sequence is Protein FPV195 (113 aa).

The protein belongs to the poxviruses A31 family.

This Vertebrata (FPV) protein is Protein FPV195.